A 348-amino-acid polypeptide reads, in one-letter code: Holliday junction branch migration complex subunit RuvB (348 aa).

Positions 1–181 (MEERMITPQQ…FGVISRLEFY (181 aa)) are large ATPase domain (RuvB-L). Positions 20, 21, 62, 65, 66, 67, 171, 181, and 218 each coordinate ATP. Position 66 (threonine 66) interacts with Mg(2+). Residues 182–252 (EVEDLIRIIT…LAGKSLDRLE (71 aa)) are small ATPAse domain (RuvB-S). A head domain (RuvB-H) region spans residues 255 to 348 (PAGLDRIDQK…GDSLFDAAED (94 aa)). Residues arginine 310 and arginine 315 each contribute to the DNA site. The segment at 329–348 (VNSSHQEGGQGDSLFDAAED) is disordered.

Belongs to the RuvB family. In terms of assembly, homohexamer. Forms an RuvA(8)-RuvB(12)-Holliday junction (HJ) complex. HJ DNA is sandwiched between 2 RuvA tetramers; dsDNA enters through RuvA and exits via RuvB. An RuvB hexamer assembles on each DNA strand where it exits the tetramer. Each RuvB hexamer is contacted by two RuvA subunits (via domain III) on 2 adjacent RuvB subunits; this complex drives branch migration. In the full resolvosome a probable DNA-RuvA(4)-RuvB(12)-RuvC(2) complex forms which resolves the HJ.

Its subcellular location is the cytoplasm. It catalyses the reaction ATP + H2O = ADP + phosphate + H(+). Its function is as follows. The RuvA-RuvB-RuvC complex processes Holliday junction (HJ) DNA during genetic recombination and DNA repair, while the RuvA-RuvB complex plays an important role in the rescue of blocked DNA replication forks via replication fork reversal (RFR). RuvA specifically binds to HJ cruciform DNA, conferring on it an open structure. The RuvB hexamer acts as an ATP-dependent pump, pulling dsDNA into and through the RuvAB complex. RuvB forms 2 homohexamers on either side of HJ DNA bound by 1 or 2 RuvA tetramers; 4 subunits per hexamer contact DNA at a time. Coordinated motions by a converter formed by DNA-disengaged RuvB subunits stimulates ATP hydrolysis and nucleotide exchange. Immobilization of the converter enables RuvB to convert the ATP-contained energy into a lever motion, pulling 2 nucleotides of DNA out of the RuvA tetramer per ATP hydrolyzed, thus driving DNA branch migration. The RuvB motors rotate together with the DNA substrate, which together with the progressing nucleotide cycle form the mechanistic basis for DNA recombination by continuous HJ branch migration. Branch migration allows RuvC to scan DNA until it finds its consensus sequence, where it cleaves and resolves cruciform DNA. This Desulfitobacterium hafniense (strain DSM 10664 / DCB-2) protein is Holliday junction branch migration complex subunit RuvB.